Here is a 97-residue protein sequence, read N- to C-terminus: Glutamyl-tRNA(Gln) amidotransferase subunit C (97 aa).

It belongs to the GatC family. As to quaternary structure, heterotrimer of A, B and C subunits.

It catalyses the reaction L-glutamyl-tRNA(Gln) + L-glutamine + ATP + H2O = L-glutaminyl-tRNA(Gln) + L-glutamate + ADP + phosphate + H(+). The catalysed reaction is L-aspartyl-tRNA(Asn) + L-glutamine + ATP + H2O = L-asparaginyl-tRNA(Asn) + L-glutamate + ADP + phosphate + 2 H(+). Its function is as follows. Allows the formation of correctly charged Asn-tRNA(Asn) or Gln-tRNA(Gln) through the transamidation of misacylated Asp-tRNA(Asn) or Glu-tRNA(Gln) in organisms which lack either or both of asparaginyl-tRNA or glutaminyl-tRNA synthetases. The reaction takes place in the presence of glutamine and ATP through an activated phospho-Asp-tRNA(Asn) or phospho-Glu-tRNA(Gln). This is Glutamyl-tRNA(Gln) amidotransferase subunit C from Saccharolobus solfataricus (strain ATCC 35092 / DSM 1617 / JCM 11322 / P2) (Sulfolobus solfataricus).